Reading from the N-terminus, the 259-residue chain is UPF0246 protein Pmen_1032 (259 aa).

Belongs to the UPF0246 family.

This chain is UPF0246 protein Pmen_1032, found in Ectopseudomonas mendocina (strain ymp) (Pseudomonas mendocina).